Consider the following 301-residue polypeptide: 3-dehydroquinate dehydratase (301 aa).

Residues 1–221 (MLQYGVLICG…YYAALLALGI (221 aa)) form a 3-dehydroquinate dehydratase region. Residues 32-34 (ELR) and Arg63 contribute to the 3-dehydroquinate site. His119 (proton donor/acceptor) is an active-site residue. The Schiff-base intermediate with substrate role is filled by Lys145. The 3-dehydroquinate site is built by Arg183, Thr202, and Gln206. Positions 222–301 (TPSGGGLPAL…QMCKAVQLVA (80 aa)) constitute a Chorismate mutase domain.

It belongs to the type-I 3-dehydroquinase family. In terms of assembly, homodimer.

The enzyme catalyses 3-dehydroquinate = 3-dehydroshikimate + H2O. Its pathway is metabolic intermediate biosynthesis; chorismate biosynthesis; chorismate from D-erythrose 4-phosphate and phosphoenolpyruvate: step 3/7. In terms of biological role, involved in the third step of the chorismate pathway, which leads to the biosynthesis of aromatic amino acids. Catalyzes the cis-dehydration of 3-dehydroquinate (DHQ) and introduces the first double bond of the aromatic ring to yield 3-dehydroshikimate. The sequence is that of 3-dehydroquinate dehydratase from Pyrobaculum aerophilum (strain ATCC 51768 / DSM 7523 / JCM 9630 / CIP 104966 / NBRC 100827 / IM2).